A 289-amino-acid chain; its full sequence is 33 kDa chaperonin (289 aa).

Cystine bridges form between C229–C231 and C262–C265.

The protein belongs to the HSP33 family. In terms of processing, under oxidizing conditions two disulfide bonds are formed involving the reactive cysteines. Under reducing conditions zinc is bound to the reactive cysteines and the protein is inactive.

The protein resides in the cytoplasm. Its function is as follows. Redox regulated molecular chaperone. Protects both thermally unfolding and oxidatively damaged proteins from irreversible aggregation. Plays an important role in the bacterial defense system toward oxidative stress. This chain is 33 kDa chaperonin, found in Pectobacterium atrosepticum (strain SCRI 1043 / ATCC BAA-672) (Erwinia carotovora subsp. atroseptica).